The primary structure comprises 149 residues: MADQLTEEQVTEFKEAFSLFDKDGDGCITTRELGTVMRSLGQNPTEAELRDMMSEIDRDGNGTVDFPEFLGMMARKMKDTDNEEEIREAFRVFDKDGNGFVSAAELRHVMTRLGEKLSDEEVDEMIRAADTDGDGQVNYEEFVRVLVSK.

4 EF-hand domains span residues 8–43 (EQVT…LGQN), 44–79 (PTEA…KMKD), 81–116 (DNEE…LGEK), and 117–149 (LSDE…LVSK). Asp-21, Asp-23, Asp-25, Cys-27, Glu-32, Asp-57, Asp-59, Asn-61, Thr-63, Glu-68, Asp-94, Asp-96, Asn-98, Glu-105, Asp-130, Asp-132, Asp-134, Gln-136, and Glu-141 together coordinate Ca(2+).

It belongs to the calmodulin family. As to quaternary structure, interacts with MYO10, the interaction is calcium-dependent and essential for MYO10 function in filopodial extension. Expressed in normal mammary, prostate, cervical, and epidermal tissues. It is greatly reduced or undetectable in transformed cells.

May function as a specific light chain of unconventional myosin-10 (MYO10), also enhances MYO10 translation, possibly by acting as a chaperone for the emerging MYO10 heavy chain protein. May compete with calmodulin by binding, with different affinities, to cellular substrates. The chain is Calmodulin-like protein 3 (CALML3) from Homo sapiens (Human).